We begin with the raw amino-acid sequence, 341 residues long: S-adenosylmethionine:tRNA ribosyltransferase-isomerase (341 aa).

Belongs to the QueA family. Monomer.

The protein localises to the cytoplasm. It carries out the reaction 7-aminomethyl-7-carbaguanosine(34) in tRNA + S-adenosyl-L-methionine = epoxyqueuosine(34) in tRNA + adenine + L-methionine + 2 H(+). It participates in tRNA modification; tRNA-queuosine biosynthesis. Its function is as follows. Transfers and isomerizes the ribose moiety from AdoMet to the 7-aminomethyl group of 7-deazaguanine (preQ1-tRNA) to give epoxyqueuosine (oQ-tRNA). The chain is S-adenosylmethionine:tRNA ribosyltransferase-isomerase from Clostridium botulinum (strain Okra / Type B1).